A 167-amino-acid polypeptide reads, in one-letter code: Phospholipase A2 imperatoxin-1 (167 aa).

Ca(2+)-binding residues include W38, G40, and G42. Disulfide bonds link C39–C61, C60–C99, C67–C92, C90–C127, and C132–C144. H64 is an active-site residue. Position 65 (D65) interacts with Ca(2+). The N-linked (GlcNAc...) asparagine glycan is linked to N102. A propeptide spanning residues 136-140 (RRLAR) is cleaved from the precursor.

It belongs to the phospholipase A2 family. Group III subfamily. As to quaternary structure, heterodimer composed of a large subunit and a small subunit; disulfide-linked. Ca(2+) serves as cofactor. In terms of tissue distribution, expressed by the venom gland.

It localises to the secreted. It carries out the reaction a 1,2-diacyl-sn-glycero-3-phosphocholine + H2O = a 1-acyl-sn-glycero-3-phosphocholine + a fatty acid + H(+). Its function is as follows. Phospholipase toxin, which may catalyze the calcium-dependent hydrolysis of the 2-acyl groups in 3-sn-phosphoglycerides. Inhibits both skeletal (RYR1) and cardiac (RYR2) ryanodine receptors (calcium release channels). Probably blocks ryanodine receptors by generating a lipid product. The polypeptide is Phospholipase A2 imperatoxin-1 (Pandinus imperator (Emperor scorpion)).